The primary structure comprises 328 residues: UPF0194 membrane protein YPTS_1292 (328 aa).

An N-terminal signal peptide occupies residues 1-22 (MNRKKIIVAAVIVALLATLAYG). Coiled coils occupy residues 80–109 (YLNALKQAQANVQSAQAQLALLKAGYREEE) and 142–209 (AVSA…ILLA).

This sequence belongs to the UPF0194 family.

The protein resides in the periplasm. This chain is UPF0194 membrane protein YPTS_1292, found in Yersinia pseudotuberculosis serotype IB (strain PB1/+).